The following is a 148-amino-acid chain: CASP-like protein 1 (148 aa).

3 consecutive transmembrane segments (helical) span residues 31–51 (FIYFVAAFSVAGLYSIITSLL), 74–94 (VLLLGIVAAAIGAAGGVGYIG), and 121–141 (IAAGLIASIVLVLLILLSFFT).

The protein belongs to the Casparian strip membrane proteins (CASP) family. In terms of assembly, homodimer and heterodimers.

It localises to the cell membrane. The sequence is that of CASP-like protein 1 from Panax ginseng (Korean ginseng).